Reading from the N-terminus, the 279-residue chain is Digeranylgeranylglyceryl phosphate synthase (279 aa).

9 consecutive transmembrane segments (helical) span residues 16 to 36 (LIAG…LPPI), 40 to 60 (LLIF…NDYF), 77 to 99 (GALS…ILIA), 104 to 121 (FEAF…YLYA), 124 to 144 (LKPQ…ITPI), 146 to 166 (GAIA…AFLV), 192 to 212 (IVWG…ATII), 220 to 240 (AGIG…LWAA), and 259 to 279 (LKIA…TKGV).

This sequence belongs to the UbiA prenyltransferase family. DGGGP synthase subfamily. Mg(2+) serves as cofactor.

It is found in the cell membrane. It carries out the reaction sn-3-O-(geranylgeranyl)glycerol 1-phosphate + (2E,6E,10E)-geranylgeranyl diphosphate = 2,3-bis-O-(geranylgeranyl)-sn-glycerol 1-phosphate + diphosphate. It participates in membrane lipid metabolism; glycerophospholipid metabolism. In terms of biological role, prenyltransferase that catalyzes the transfer of the geranylgeranyl moiety of geranylgeranyl diphosphate (GGPP) to the C2 hydroxyl of (S)-3-O-geranylgeranylglyceryl phosphate (GGGP). This reaction is the second ether-bond-formation step in the biosynthesis of archaeal membrane lipids. The sequence is that of Digeranylgeranylglyceryl phosphate synthase from Thermococcus sibiricus (strain DSM 12597 / MM 739).